A 505-amino-acid polypeptide reads, in one-letter code: MPVEENYQPLLQEEEERAYDSDEKVLIIGVDSDTESGGSTVLPPFSWKKLWLFTGPGFLMSIAFLDPGNLEGDLQAGAIAGYSLLWLLLWATAMGLLVQLLSARLGVATGRHLAELCREEYPTWASMVLWIMAELALIGADIQEVIGSAIAIKILSNGFVPLWAGVTITACDCFIFLFLENYGVRKLEAVFAVLIGIMAVTFGWMFADAKPSASELFLGILIPKLSSRTIQQAVGVVGCIIMPHNVFLHSALVQSREIDHNKKDRVQEALRYYSIESTTALVISFVINLFVTTVFAKGFYGTELANSIGLVNAGQYLQDKYGGGFFPILYIWGIGLLAAGQSSTITGTYAGQFIMGGFLNLRLKKWLRALITRSCAIIPTMIVALVFDTSEDSLDVLNEWLNVLQSIQIPFALIPLLCLVSKEQIMGTFKIGPILKMVAWLVAALVMVINGYLLLDFFFNEVTGVAFTTVVCGFTGAYVAFIIYLISRGFTCFSRCCPSKQIEVE.

12 helical membrane-spanning segments follow: residues 50 to 70 (LWLF…PGNL), 78 to 98 (AIAG…GLLV), 127 to 147 (MVLW…EVIG), 159 to 179 (FVPL…FLFL), 187 to 207 (LEAV…WMFA), 233 to 253 (AVGV…SALV), 280 to 300 (ALVI…KGFY), 321 to 341 (YGGG…AAGQ), 369 to 389 (ALIT…VFDT), 400 to 420 (WLNV…LCLV), 439 to 459 (AWLV…DFFF), and 466 to 486 (AFTT…IYLI).

This sequence belongs to the NRAMP (TC 2.A.55) family. As to expression, expressed in roots, stems, buds and leaves.

The protein localises to the vacuole membrane. The catalysed reaction is Mn(2+)(in) = Mn(2+)(out). The enzyme catalyses Fe(2+)(in) = Fe(2+)(out). Divalent metal transporter. Can transport manganese (Mn) and iron (Fe). Involved in the release of metals stored in the vacuole. This is Metal transporter Nramp3.2 from Populus trichocarpa (Western balsam poplar).